Here is a 78-residue protein sequence, read N- to C-terminus: Acyl carrier protein (78 aa).

Positions 2–77 constitute a Carrier domain; sequence STIEESVKAI…AAIDFIQASQ (76 aa). Position 37 is an O-(pantetheine 4'-phosphoryl)serine (serine 37).

It belongs to the acyl carrier protein (ACP) family. Post-translationally, 4'-phosphopantetheine is transferred from CoA to a specific serine of apo-ACP by AcpS. This modification is essential for activity because fatty acids are bound in thioester linkage to the sulfhydryl of the prosthetic group.

Its subcellular location is the cytoplasm. The protein operates within lipid metabolism; fatty acid biosynthesis. In terms of biological role, carrier of the growing fatty acid chain in fatty acid biosynthesis. The polypeptide is Acyl carrier protein (Sodalis glossinidius (strain morsitans)).